Consider the following 161-residue polypeptide: Protein OPG060 (161 aa).

Belongs to the orthopoxvirus OPG058 family.

The chain is Protein OPG060 (OPG060) from Homo sapiens (Human).